A 514-amino-acid chain; its full sequence is Carboxysome shell carbonic anhydrase (514 aa).

An N-terminal domain region spans residues 1 to 144; it reads MNTRNTRSKQ…LTAATEQFSR (144 aa). The catalytic domain stretch occupies residues 151–397; that stretch reads DDSASAIGFF…GRYPPNDIGH (247 aa). Position 173 (Cys173) interacts with Zn(2+). Asp175 functions as the Proton acceptor in the catalytic mechanism. Positions 242 and 253 each coordinate Zn(2+). Residues 398–514 form a C-terminal domain region; it reads AERYISVGDG…GSPIEEVASA (117 aa).

Belongs to the beta-class carbonic anhydrase family. CsoSCA subfamily. As to quaternary structure, homodimer, may form filaments. Zn(2+) is required as a cofactor.

It is found in the carboxysome. It carries out the reaction hydrogencarbonate + H(+) = CO2 + H2O. Carbonic anhydrase activity is inhibited by ethoxyzolamide, dithiothreitol, cyanide, and divalent metal chelators dipicolinic acid and nitrilotriacetic acid. Reversible hydration of carbon dioxide. Essential for chemolithotrophic carbon dioxide fixation, supplies CO(2) to RuBisCO (ribulose bisphosphate carboxylase, cbbL-cbbS) in the carboxysome. There are estimated to be 40 CsoSCA dimers per carboxysome. Functionally, unlike beta-carboxysomes, alpha-carboxysomes (Cb) can form without cargo protein. CsoS2 is essential for Cb formation and is also capable of targeting foreign proteins to the Cb. The Cb shell assembles with the aid of CsoS2; CsoS1A, CsoS1B and CsoS1C form the majority of the shell while CsoS4A and CsoS4B form vertices. CsoS1D forms pseudohexamers that probably control metabolite flux into and out of the shell. This Halothiobacillus neapolitanus (strain ATCC 23641 / c2) (Thiobacillus neapolitanus) protein is Carboxysome shell carbonic anhydrase.